The primary structure comprises 449 residues: Elongation factor 1-alpha (449 aa).

The tr-type G domain occupies 5 to 230 (KVHINIVVIG…DQIQEPKRPS (226 aa)). The segment at 14–21 (GHVDSGKS) is G1. 14 to 21 (GHVDSGKS) is a GTP binding site. Residue Lys-55 is modified to N6,N6-dimethyllysine. The segment at 70–74 (GITID) is G2. Lys-79 is subject to N6,N6,N6-trimethyllysine. Residues 91–94 (DAPG) are G3. GTP is bound by residues 91–95 (DAPGH) and 153–156 (NKMD). The G4 stretch occupies residues 153–156 (NKMD). Residue Lys-187 is modified to N6,N6,N6-trimethyllysine. The segment at 194-196 (SGF) is G5. Residue Lys-261 is modified to N6-methyllysine. Glu-289 carries the 5-glutamyl glycerylphosphorylethanolamine modification. Lys-306 is subject to N6,N6,N6-trimethyllysine. Position 362 is a 5-glutamyl glycerylphosphorylethanolamine (Glu-362). Lys-396 bears the N6,N6,N6-trimethyllysine mark.

It belongs to the TRAFAC class translation factor GTPase superfamily. Classic translation factor GTPase family. EF-Tu/EF-1A subfamily.

The protein resides in the cytoplasm. This protein promotes the GTP-dependent binding of aminoacyl-tRNA to the A-site of ribosomes during protein biosynthesis. The chain is Elongation factor 1-alpha (EF1) from Manihot esculenta (Cassava).